Here is a 116-residue protein sequence, read N- to C-terminus: NADH-ubiquinone oxidoreductase chain 3 (116 aa).

3 consecutive transmembrane segments (helical) span residues 3 to 23, 56 to 76, and 85 to 105; these read LVISILAITIILSSILAVVSF, FFLVAILFLLFDLEIALLLAL, and ATGTFFWATAVLILLTLGLIY.

The protein belongs to the complex I subunit 3 family.

The protein localises to the mitochondrion membrane. The enzyme catalyses a ubiquinone + NADH + 5 H(+)(in) = a ubiquinol + NAD(+) + 4 H(+)(out). In terms of biological role, core subunit of the mitochondrial membrane respiratory chain NADH dehydrogenase (Complex I) that is believed to belong to the minimal assembly required for catalysis. Complex I functions in the transfer of electrons from NADH to the respiratory chain. The immediate electron acceptor for the enzyme is believed to be ubiquinone. This chain is NADH-ubiquinone oxidoreductase chain 3 (MT-ND3), found in Formosania lacustris (Oriental stream loach).